The chain runs to 434 residues: 4-hydroxyphenylpyruvate dioxygenase (434 aa).

The disordered stretch occupies residues 1–21 (MPPTPTTPAATGAAAAVTPEH). Residues 7 to 19 (TPAATGAAAAVTP) show a composition bias toward low complexity. VOC domains follow at residues 41-192 (SFHH…FLPG) and 208-368 (RFDH…IFTK). Positions 211, 293, and 379 each coordinate Fe cation.

This sequence belongs to the 4HPPD family. Fe cation serves as cofactor.

Its subcellular location is the cytoplasm. It carries out the reaction 3-(4-hydroxyphenyl)pyruvate + O2 = homogentisate + CO2. It functions in the pathway amino-acid degradation; L-phenylalanine degradation; acetoacetate and fumarate from L-phenylalanine: step 3/6. Its pathway is cofactor biosynthesis; prenylquinone biosynthesis. This is 4-hydroxyphenylpyruvate dioxygenase from Hordeum vulgare (Barley).